We begin with the raw amino-acid sequence, 242 residues long: Protein HTATIP2 (242 aa).

A2 carries the N-acetylalanine modification. Residues 2–25 (ADKETLLKLREDFKMQNKSVFILG) are required for interaction with elongation factor EEF1A1. S27, G28, E29, T30, R52, R53, L92, G93, Y143, K147, L170, and R178 together coordinate NADPH. Y143 (proton acceptor) is an active-site residue. K147 is a catalytic residue.

Monomer. Forms homodimers during oxidative stress. Interacts (via N-terminus) with elongation factor EEF1A1 (via middle-region); the interaction is direct and competes with EEF1A1 binding to guanyl-nucleotide exchange factor EEF1B2, thereby inhibiting GDP for GTP exchange and reactivation of EEF1A1. Interacts with nuclear transport receptors XPO4, IPO5/RANBP5, IPO7, IPO9 and KPNB1 as well as GCN1L1/GCN1 and LRPPRC probably through their HEAT repeats. Binds NCOA5/CIA.

Represses translation by preventing reactivation of elongation factor eEF1A. May also inhibit nuclear import by competing with nuclear import substrates for binding to a subset of nuclear transport receptors. Has additionally been proposed to act as a redox sensor involved in cellular oxidative stress surveillance. May bind NADPH. The chain is Protein HTATIP2 from Rattus norvegicus (Rat).